Here is a 226-residue protein sequence, read N- to C-terminus: Cytidylate kinase (226 aa).

10-18 (GPASSGKST) provides a ligand contact to ATP.

It belongs to the cytidylate kinase family. Type 1 subfamily.

The protein localises to the cytoplasm. It carries out the reaction CMP + ATP = CDP + ADP. It catalyses the reaction dCMP + ATP = dCDP + ADP. The polypeptide is Cytidylate kinase (Enterococcus faecalis (strain ATCC 700802 / V583)).